A 1417-amino-acid chain; its full sequence is DNA-directed RNA polymerase subunit beta' (1417 aa).

Zn(2+) is bound by residues C68, C70, C83, and C86. 3 residues coordinate Mg(2+): D458, D460, and D462. 4 residues coordinate Zn(2+): C811, C884, C891, and C894.

The protein belongs to the RNA polymerase beta' chain family. In terms of assembly, the RNAP catalytic core consists of 2 alpha, 1 beta, 1 beta' and 1 omega subunit. When a sigma factor is associated with the core the holoenzyme is formed, which can initiate transcription. Requires Mg(2+) as cofactor. The cofactor is Zn(2+).

The catalysed reaction is RNA(n) + a ribonucleoside 5'-triphosphate = RNA(n+1) + diphosphate. DNA-dependent RNA polymerase catalyzes the transcription of DNA into RNA using the four ribonucleoside triphosphates as substrates. This chain is DNA-directed RNA polymerase subunit beta', found in Francisella tularensis subsp. holarctica (strain OSU18).